A 1645-amino-acid polypeptide reads, in one-letter code: MGLRAGRLASPSRGVLQLLRLPLLLLLLLSSGARGAAAQGDTEVPTLYLWKTGPWGRCMGDDCGPGGIQTRAVWCAHVEGWTTLHTNCKQAVRPSNQQNCFKVCDWHKELYDWRLGTWDRCQPVISKSLEKSRECVKGEEGIQVREIMCIQKDKDIPAEDIICEYFEPKPLLEQACLIPCQKDCIVSEFSPWSECSRTCGSGLQHRTRHVVAPPQYGGSGCPNLTEFQVCQSNPCEEDESLYSLQVGPWSACSVPHTRQARQARRRGKNKEREKERGKAVKDPEARELIKKKRNRNRQNRQENRYWDIQIGYQTRDVTCLNRTGKSADLSFCQQERLPMTFQSCVITKECQVSEWLEWSPCSKTCHDVTSPTGTRVRTRTITQFPIGSEKECPALEEKEPCVSQGDGAVLCATYGWRTTEWTECHVDPLLSQQDKRRANQTALCGGGVQTREIYCIQTNDNMLSHGNTQKDKEASKPVDSKLCTGPVPNTTQLCHVPCPIECEVSPWSAWGPCTYENCNDQQGKKGFKLRKRRITNEPTGGSGATGNCPHLLEAIPCEEPSCYDWKSVRLGDCEPDNGKSCGPGTQVQEVVCINSDGEEVDRQLCRDAIFPIPVACDAPCPKDCVLSAWSSWSSCSHTCSGKTTEGKQTRARSILAYAGEEGGIRCPNISALQEVRSCNEHPCTVYHWQTGPWGQCIEDTSVSSFNTTTTWNGEASCSVGMQTRKVICVRVNVGQVGPKKCPESLRPETVRPCLLPCRKDCVVTPYSDWTPCPSSCREGDSGARKQSRQRVIIQLPANGGKECSDPLYEEKACEAPPTCHSYRWKTHKWRRCQLVPWSIQQDVPGAQEGCGPGRQARAITCRKQDGGQASIQECLQYAGPVPALTQACQIPCQDDCQFTSWSKFSSCNGDCGAVRTRKRAIVGKSKKKEKCKNSHLYPLIETQYCPCDKYNAQPVGNWSDCILPEGKAEVLLGMKVQGDSKECGQGYRYQAMACYDQNGRLVETSRCNSHGYIEEACIIPCPSDCKLSEWSNWSRCSKSCGSGVKVRSKWLREKPYNGGRPCPKLDHVNQAQVYEVVPCHSDCNQYIWVTEPWSVCKVTFVDMRDNCGEGVQTRKVRCMQNTADGPSEHVEDYLCDPEDMPLGSRECKLPCPEDCVISEWGPWTCALPCNPSGSRQRSADPIRQPADEGRACPDAVEKEPCSLNKNCYHYDYNVTDWSTCQLSEKAVCGNGIKTRMLDCVRSDGKSVDLKYCEELGLEKNWPMNTSCTVECPVNCQLSDWSSWSQCSQTCGLTGKMIRKRTVTQPFQGDGRPCPSLMEQSKPCPVKPCYRWQYGQWSPCQVQEAQCGEGTRTRNISCVVSDGSAEDFSKVVDEEFCANTELIIDGNKQIVLEETCTQPCPGDCYLNDWSSWSLCQLTCVNGEDLGFGGIQVRSRAVIIQELENQHLCPEQMLETKSCDDGQCYEYKWVASAWKGSSRTVWCQRSDGINVTGGCLVVSQPDTDRSCNPPCSQPHSYCSEMKTCRCEEGYTEVMSSNSTLEQCTLIPVVVIPTVEDKRGDVKTSRAVHPTQPSINPAGRGRTWFLQPFGPDGRLKTWVYGVAAGAFVLLVFIVSMIYLACKKPKKPQRRQNNRLKPLTLAYDGDADM.

Residues Met-1–Ala-38 form the signal peptide. The Extracellular portion of the chain corresponds to Gln-39–Trp-1595. TSP type-1 domains follow at residues Thr-46–Asp-105, Glu-109–Gln-181, and Asp-183–Glu-236. The N-linked (GlcNAc...) asparagine glycan is linked to Asn-223. Positions Pro-255 to Arg-300 are disordered. Residues His-256–Arg-304 adopt a coiled-coil conformation. Basic residues predominate over residues Arg-258–Asn-269. Positions Lys-270–Leu-288 are enriched in basic and acidic residues. Positions Ile-289 to Gln-298 are enriched in basic residues. Asn-321 is a glycosylation site (N-linked (GlcNAc...) asparagine). 16 TSP type-1 domains span residues Glu-349–Gly-405, Ala-412–Pro-499, Glu-501–Tyr-563, Asp-623–Thr-684, Val-685–Arg-758, Asp-760–His-820, Ser-821–Gln-893, Asp-895–Asp-948, Lys-949–Pro-1022, Asp-1024–Asn-1084, Gln-1085–Pro-1152, Asp-1154–Tyr-1208, His-1209–Pro-1272, Asn-1274–Tyr-1329, Arg-1330–Pro-1400, and Asp-1402–Tyr-1463. 3 disulfide bridges follow: Cys-424–Cys-494, Cys-444–Cys-498, and Cys-455–Cys-483. Asn-439 carries N-linked (GlcNAc...) asparagine glycosylation. An N-linked (GlcNAc...) asparagine glycan is attached at Asn-489. Disulfide bonds link Cys-624/Cys-666 and Cys-635/Cys-639. A glycan (N-linked (GlcNAc...) asparagine) is linked at Asn-668. 7 disulfide bridges follow: Cys-678–Cys-683, Cys-696–Cys-753, Cys-717–Cys-757, Cys-728–Cys-741, Cys-761–Cys-803, Cys-772–Cys-776, and Cys-813–Cys-819. An N-linked (GlcNAc...) asparagine glycan is attached at Asn-706. An N-linked (GlcNAc...) asparagine glycan is attached at Asn-957. Disulfide bonds link Cys-961-Cys-1017, Cys-983-Cys-1021, Cys-994-Cys-1007, Cys-1025-Cys-1062, Cys-1036-Cys-1040, and Cys-1079-Cys-1083. Asn-1032 is a glycosylation site (N-linked (GlcNAc...) asparagine). A disulfide bridge links Cys-1201 with Cys-1207. Asn-1213 carries N-linked (GlcNAc...) asparagine glycosylation. 12 disulfide bridges follow: Cys-1220–Cys-1267, Cys-1228–Cys-1271, Cys-1239–Cys-1252, Cys-1275–Cys-1313, Cys-1286–Cys-1290, Cys-1323–Cys-1328, Cys-1339–Cys-1395, Cys-1346–Cys-1399, Cys-1357–Cys-1376, Cys-1403–Cys-1447, Cys-1414–Cys-1418, and Cys-1457–Cys-1462. An N-linked (GlcNAc...) asparagine glycan is attached at Asn-1264. An N-linked (GlcNAc...) asparagine glycan is attached at Asn-1354. N-linked (GlcNAc...) asparagine glycosylation is found at Asn-1488 and Asn-1535. Residues Val-1596–Leu-1616 form a helical membrane-spanning segment. At Ala-1617 to Met-1645 the chain is on the cytoplasmic side.

Post-translationally, proteolytic cleavage in the extracellular region generates a 210 kDa soluble form. Extensively N-glycosylated. As to expression, detected on kidney podocytes along the glomerular capillary wall (at protein level).

The protein localises to the cell membrane. Its subcellular location is the cell projection. It is found in the secreted. In terms of biological role, plays a role in actin cytoskeleton rearrangement. Its function is as follows. The soluble form promotes endothelial cell migration and filopodia formation during sprouting angiogenesis via a FAK-dependent mechanism. In Mus musculus (Mouse), this protein is Thrombospondin type-1 domain-containing protein 7A (Thsd7a).